A 284-amino-acid polypeptide reads, in one-letter code: MKQKVVSIGDINVANDLPFVLFGGMNVLESRDLAMRICEHYVTVTQKLGIPYVFKASFDKANRSSIHSYRGPGLEEGMKIFQELKQQFGVKVITDVHEASQAQPVSEVVDVIQLPAFLARQTDLVEAMARTGAVINVKKPQFVSPGQMGNIVEKFKEAGNDQVILCDRGSNFGYDNLVVDMLGINVMVQATGGHPVIFDVTHALQCRDPFGAASGGRRAQVAELARAGMAVGLAGLFIEAHPEPNSAKCDGPSALPLDKLEPFLVQMKAIDDLVKSFPALDTSK.

The protein belongs to the KdsA family.

Its subcellular location is the cytoplasm. The catalysed reaction is D-arabinose 5-phosphate + phosphoenolpyruvate + H2O = 3-deoxy-alpha-D-manno-2-octulosonate-8-phosphate + phosphate. Its pathway is carbohydrate biosynthesis; 3-deoxy-D-manno-octulosonate biosynthesis; 3-deoxy-D-manno-octulosonate from D-ribulose 5-phosphate: step 2/3. It participates in bacterial outer membrane biogenesis; lipopolysaccharide biosynthesis. This Yersinia pseudotuberculosis serotype O:1b (strain IP 31758) protein is 2-dehydro-3-deoxyphosphooctonate aldolase.